Reading from the N-terminus, the 199-residue chain is Peroxiredoxin-1 (199 aa).

The region spanning 6–165 (AYIGKLAPDF…TLRLVQAFQF (160 aa)) is the Thioredoxin domain. The Cysteine sulfenic acid (-SOH) intermediate role is filled by C52.

Belongs to the peroxiredoxin family. AhpC/Prx1 subfamily. As to quaternary structure, homodimer; disulfide-linked, upon oxidation. 5 homodimers assemble to form a ring-like decamer. Interacts with GDPD5; forms a mixed-disulfide with GDPD5. Interacts with SESN1 and SESN2. Interacts with FAM107A. Post-translationally, the enzyme can be inactivated by further oxidation of the cysteine sulfenic acid (C(P)-SOH) to sulphinic acid (C(P)-SO2H) instead of its condensation to a disulfide bond. It can be reactivated by forming a transient disulfide bond with sulfiredoxin SRXN1, which reduces the cysteine sulfinic acid in an ATP- and Mg-dependent manner.

The protein localises to the cytoplasm. The enzyme catalyses a hydroperoxide + [thioredoxin]-dithiol = an alcohol + [thioredoxin]-disulfide + H2O. Thiol-specific peroxidase that catalyzes the reduction of hydrogen peroxide and organic hydroperoxides to water and alcohols, respectively. Plays a role in cell protection against oxidative stress by detoxifying peroxides and as sensor of hydrogen peroxide-mediated signaling events. Might participate in the signaling cascades of growth factors and tumor necrosis factor-alpha by regulating the intracellular concentrations of H(2)O(2). Reduces an intramolecular disulfide bond in GDPD5 that gates the ability to GDPD5 to drive postmitotic motor neuron differentiation. The polypeptide is Peroxiredoxin-1 (PRDX1) (Gekko japonicus (Schlegel's Japanese gecko)).